Reading from the N-terminus, the 448-residue chain is Probable D-serine dehydratase (448 aa).

Lysine 119 bears the N6-(pyridoxal phosphate)lysine mark.

Belongs to the serine/threonine dehydratase family. DsdA subfamily. Pyridoxal 5'-phosphate is required as a cofactor.

It carries out the reaction D-serine = pyruvate + NH4(+). The polypeptide is Probable D-serine dehydratase (Pseudomonas aeruginosa (strain UCBPP-PA14)).